A 376-amino-acid chain; its full sequence is MAISFRTLALLTLSVLLISISLGVVTATESQRNEGEVLTMYEQWLVENGKNYNGLGEKERRFKIFKDNLKRIEEHNSDPNRSYERGLNKFSDLTADEFQASYLGGKMEKKSLSDVAERYQYKEGDVLPDEVDWRERGAVVPRVKRQGECGSCWAFAATGAVEGINQITTGELVSLSEQELIDCDRGNDNFGCAGGGAVWAFEFIKENGGIVSDEVYGYTGEDTAACKAIEMKTTRVVTINGHEVVPVNDEMSLKKAVAYQPISVMISAANMSDYKSGVYKGACSNLWGDHNVLIVGYGTSSDEGDYWLIRNSWGPEWGEGGYLRLQRNFHEPTGKCAVAVAPVYPIKSNSSSHLLSPSVFKLVVLFVFQLISLALL.

The N-terminal stretch at 1 to 27 is a signal peptide; it reads MAISFRTLALLTLSVLLISISLGVVTA. Positions 28–126 are cleaved as a propeptide — activation peptide; it reads TESQRNEGEV…ERYQYKEGDV (99 aa). Asparagine 80 is a glycosylation site (N-linked (GlcNAc...) asparagine). Intrachain disulfides connect cysteine 149/cysteine 192 and cysteine 183/cysteine 226. Cysteine 152 is an active-site residue. An N-linked (GlcNAc...) asparagine glycan is attached at asparagine 270. Cysteine 283 and cysteine 336 are joined by a disulfide. Active-site residues include histidine 290 and asparagine 311. Asparagine 349 carries an N-linked (GlcNAc...) asparagine glycan.

Belongs to the peptidase C1 family. In terms of tissue distribution, expressed in root hairs.

Its function is as follows. Probable thiol protease. The polypeptide is Probable cysteine protease RDL3 (Arabidopsis thaliana (Mouse-ear cress)).